The chain runs to 503 residues: Dihydropyrimidinase (503 aa).

Zn(2+) contacts are provided by H66, H68, and K158. K158 bears the N6-carboxylysine mark. Y163 contacts substrate. 3 residues coordinate Zn(2+): H191, H247, and D325. N346 is a binding site for substrate.

It belongs to the metallo-dependent hydrolases superfamily. Hydantoinase/dihydropyrimidinase family. As to quaternary structure, homotetramer. The cofactor is Zn(2+). Post-translationally, carboxylation allows a single lysine to coordinate two zinc ions.

It catalyses the reaction 5,6-dihydrouracil + H2O = 3-(carbamoylamino)propanoate + H(+). Functionally, catalyzes the second step of the reductive pyrimidine degradation, the reversible hydrolytic ring opening of dihydropyrimidines. Can catalyze the ring opening of 5,6-dihydrouracil to N-carbamyl-alanine and of 5,6-dihydrothymine to N-carbamyl-amino isobutyrate. The polypeptide is Dihydropyrimidinase (pyd2) (Dictyostelium discoideum (Social amoeba)).